The primary structure comprises 496 residues: Glutamate--tRNA ligase 2 (496 aa).

The 'HIGH' region motif lies at 13 to 23 (PSPTGRLHVGG). The 'KMSKS' region motif lies at 255-259 (KLSKR). K258 lines the ATP pocket.

The protein belongs to the class-I aminoacyl-tRNA synthetase family. Glutamate--tRNA ligase type 1 subfamily. As to quaternary structure, monomer.

The protein localises to the cytoplasm. It catalyses the reaction tRNA(Glu) + L-glutamate + ATP = L-glutamyl-tRNA(Glu) + AMP + diphosphate. Functionally, catalyzes the attachment of glutamate to tRNA(Glu) in a two-step reaction: glutamate is first activated by ATP to form Glu-AMP and then transferred to the acceptor end of tRNA(Glu). This chain is Glutamate--tRNA ligase 2, found in Rubrobacter xylanophilus (strain DSM 9941 / JCM 11954 / NBRC 16129 / PRD-1).